Consider the following 87-residue polypeptide: Defensin-like protein 81 (87 aa).

The N-terminal stretch at Met1 to Gly27 is a signal peptide. 4 disulfides stabilise this stretch: Cys33–Cys69, Cys37–Cys57, Cys43–Cys67, and Cys47–Cys68.

This sequence belongs to the DEFL family.

The protein localises to the secreted. This is Defensin-like protein 81 from Arabidopsis thaliana (Mouse-ear cress).